We begin with the raw amino-acid sequence, 216 residues long: MPELVFFSGTMDCGKSTLALQIGHNRSARGLQGVIFTRDDRAGEGKLSSRLGLVTEAVEAAPGMDLHAYLVDQMSKGGKVDYLIVDEAQFLAPEQIDQLARVVDDLDLDVFAFGITTDFRTKLFPGSQRLIELADRIETLQVEAMCWCGARATHNARTVGGEMVVEGEQVVVGDVNRPAAEVGYEVLCRRHHRRRMTSASAYAAAISPDVLPVTSA.

ATP is bound by residues 9 to 16 (GTMDCGKS) and 86 to 89 (DEAQ). The Proton acceptor role is filled by Glu87.

It belongs to the thymidine kinase family. In terms of assembly, homotetramer.

It localises to the cytoplasm. It catalyses the reaction thymidine + ATP = dTMP + ADP + H(+). The sequence is that of Thymidine kinase from Streptomyces avermitilis (strain ATCC 31267 / DSM 46492 / JCM 5070 / NBRC 14893 / NCIMB 12804 / NRRL 8165 / MA-4680).